The chain runs to 360 residues: Peptide chain release factor 1 (360 aa).

Q234 carries the N5-methylglutamine modification.

Belongs to the prokaryotic/mitochondrial release factor family. Methylated by PrmC. Methylation increases the termination efficiency of RF1.

It is found in the cytoplasm. Peptide chain release factor 1 directs the termination of translation in response to the peptide chain termination codons UAG and UAA. This chain is Peptide chain release factor 1, found in Clostridium perfringens (strain 13 / Type A).